The chain runs to 510 residues: NAD(P)H-quinone oxidoreductase subunit 2 B, chloroplastic (510 aa).

The next 13 helical transmembrane spans lie at 24-44, 57-77, 99-119, 124-144, 149-169, 183-203, 227-247, 295-315, 323-343, 354-374, 395-415, 418-438, and 482-502; these read LLLF…GLIL, ISWF…VLLF, IFQF…VEYI, MAIT…MFLC, LITI…LSGY, YLLM…WLYG, PGIS…LSLA, WHLL…LIAI, MLAY…IVGD, YMLF…SFGL, ALSL…AGFF, LYLF…IGLL, and LSMI…NPII.

It belongs to the complex I subunit 2 family. NDH is composed of at least 16 different subunits, 5 of which are encoded in the nucleus.

It localises to the plastid. The protein localises to the chloroplast thylakoid membrane. The enzyme catalyses a plastoquinone + NADH + (n+1) H(+)(in) = a plastoquinol + NAD(+) + n H(+)(out). The catalysed reaction is a plastoquinone + NADPH + (n+1) H(+)(in) = a plastoquinol + NADP(+) + n H(+)(out). Functionally, NDH shuttles electrons from NAD(P)H:plastoquinone, via FMN and iron-sulfur (Fe-S) centers, to quinones in the photosynthetic chain and possibly in a chloroplast respiratory chain. The immediate electron acceptor for the enzyme in this species is believed to be plastoquinone. Couples the redox reaction to proton translocation, and thus conserves the redox energy in a proton gradient. The chain is NAD(P)H-quinone oxidoreductase subunit 2 B, chloroplastic from Lotus japonicus (Lotus corniculatus var. japonicus).